The chain runs to 787 residues: DNA ligase (787 aa).

NAD(+) contacts are provided by residues Asp-32–Asp-36, Ser-81–Leu-82, and Glu-121. Residue Lys-123 is the N6-AMP-lysine intermediate of the active site. Arg-144, Glu-181, Lys-297, and Lys-321 together coordinate NAD(+). Residues Cys-415, Cys-418, Cys-445, and Cys-451 each coordinate Zn(2+). The region spanning Val-703–Asp-787 is the BRCT domain.

Belongs to the NAD-dependent DNA ligase family. LigA subfamily. Requires Mg(2+) as cofactor. Mn(2+) serves as cofactor.

It catalyses the reaction NAD(+) + (deoxyribonucleotide)n-3'-hydroxyl + 5'-phospho-(deoxyribonucleotide)m = (deoxyribonucleotide)n+m + AMP + beta-nicotinamide D-nucleotide.. In terms of biological role, DNA ligase that catalyzes the formation of phosphodiester linkages between 5'-phosphoryl and 3'-hydroxyl groups in double-stranded DNA using NAD as a coenzyme and as the energy source for the reaction. It is essential for DNA replication and repair of damaged DNA. This chain is DNA ligase, found in Pseudomonas syringae pv. tomato (strain ATCC BAA-871 / DC3000).